A 275-amino-acid chain; its full sequence is Formamidopyrimidine-DNA glycosylase (275 aa).

P2 acts as the Schiff-base intermediate with DNA in catalysis. E3 functions as the Proton donor in the catalytic mechanism. Catalysis depends on K60, which acts as the Proton donor; for beta-elimination activity. The DNA site is built by H93 and R112. The segment at 240–274 adopts an FPG-type zinc-finger fold; it reads FVYGRKDEPCKKCGSPIEKTVVGGRGTHFCIKCQK. R264 (proton donor; for delta-elimination activity) is an active-site residue.

The protein belongs to the FPG family. Monomer. Zn(2+) is required as a cofactor.

The enzyme catalyses Hydrolysis of DNA containing ring-opened 7-methylguanine residues, releasing 2,6-diamino-4-hydroxy-5-(N-methyl)formamidopyrimidine.. It carries out the reaction 2'-deoxyribonucleotide-(2'-deoxyribose 5'-phosphate)-2'-deoxyribonucleotide-DNA = a 3'-end 2'-deoxyribonucleotide-(2,3-dehydro-2,3-deoxyribose 5'-phosphate)-DNA + a 5'-end 5'-phospho-2'-deoxyribonucleoside-DNA + H(+). Involved in base excision repair of DNA damaged by oxidation or by mutagenic agents. Acts as a DNA glycosylase that recognizes and removes damaged bases. Has a preference for oxidized purines, such as 7,8-dihydro-8-oxoguanine (8-oxoG). Has AP (apurinic/apyrimidinic) lyase activity and introduces nicks in the DNA strand. Cleaves the DNA backbone by beta-delta elimination to generate a single-strand break at the site of the removed base with both 3'- and 5'-phosphates. This Bacillus licheniformis (strain ATCC 14580 / DSM 13 / JCM 2505 / CCUG 7422 / NBRC 12200 / NCIMB 9375 / NCTC 10341 / NRRL NRS-1264 / Gibson 46) protein is Formamidopyrimidine-DNA glycosylase.